The following is a 555-amino-acid chain: B3 domain-containing protein REM10 (555 aa).

DNA-binding regions (TF-B3) lie at residues 11–103 (NPQF…LGPS), 150–247 (CFVA…FPMT), 276–372 (SFVA…LPLN), and 460–554 (SQNR…FCSK).

It is found in the nucleus. This chain is B3 domain-containing protein REM10 (REM10), found in Arabidopsis thaliana (Mouse-ear cress).